The primary structure comprises 345 residues: Protein arginine N-methyltransferase 1 (345 aa).

The region spanning 24–345 (ADYYFDSYSH…VKNTQQYRMR (322 aa)) is the SAM-dependent MTase PRMT-type domain. S-adenosyl-L-methionine-binding residues include His-37, Arg-46, Gly-70, Glu-92, and Glu-121. Catalysis depends on residues Glu-136 and Glu-145.

Belongs to the class I-like SAM-binding methyltransferase superfamily. Protein arginine N-methyltransferase family. Post-translationally, phosphorylated during flagellum resorption.

It localises to the nucleus. The protein localises to the cell projection. Its subcellular location is the cilium. The protein resides in the flagellum. It catalyses the reaction L-arginyl-[protein] + S-adenosyl-L-methionine = N(omega)-methyl-L-arginyl-[protein] + S-adenosyl-L-homocysteine + H(+). The enzyme catalyses L-arginyl-[protein] + 2 S-adenosyl-L-methionine = N(omega),N(omega)-dimethyl-L-arginyl-[protein] + 2 S-adenosyl-L-homocysteine + 2 H(+). Its function is as follows. Arginine methyltransferase that methylates (mono and asymmetric dimethylation) the guanidino nitrogens of arginyl residues present in target proteins. Mediates asymmetric dimethylation of components of the axoneme during flagellum resorption, such as CCDC40/FAP172, CCDC65/FAP250, RSP1, RSP2, RPS5, RSP6, and tektin. In Chlamydomonas reinhardtii (Chlamydomonas smithii), this protein is Protein arginine N-methyltransferase 1 (PRMT1).